We begin with the raw amino-acid sequence, 608 residues long: Dolichyl-diphosphooligosaccharide--protein glycosyltransferase subunit 1 (608 aa).

The N-terminal stretch at 1–24 is a signal peptide; sequence MEAPAVCLLPLLLLLWAWAPAPGR. Over 25 to 435 the chain is Lumenal; that stretch reads ASPEALPLVN…VVHYTFNKVL (411 aa). Lysine 188 is subject to N6-acetyllysine. N-linked (GlcNAc...) asparagine glycosylation is present at asparagine 300. A helical membrane pass occupies residues 436-456; that stretch reads MLQEPLLVVAAFYILFFTVIV. At 457-607 the chain is on the cytoplasmic side; it reads YVRLDFSITK…VTKIDHILDA (151 aa). Lysine 539 is subject to N6-acetyllysine; alternate. Residue lysine 539 forms a Glycyl lysine isopeptide (Lys-Gly) (interchain with G-Cter in SUMO2); alternate linkage.

This sequence belongs to the OST1 family. As to quaternary structure, component of the oligosaccharyltransferase (OST) complex. OST exists in two different complex forms which contain common core subunits RPN1, RPN2, OST48, OST4, DAD1 and TMEM258, either STT3A or STT3B as catalytic subunits, and form-specific accessory subunits. STT3A complex assembly occurs through the formation of 3 subcomplexes. Subcomplex 1 contains RPN1 and TMEM258, subcomplex 2 contains the STT3A-specific subunits STT3A, DC2/OSTC, and KCP2 as well as the core subunit OST4, and subcomplex 3 contains RPN2, DAD1, and OST48. The STT3A complex can form stable complexes with the Sec61 complex or with both the Sec61 and TRAP complexes. Interacts with TMEM35A/NACHO. Ubiquitinated by the ECS(ASB11) complex. Post-translationally, ufmylated by UFL1 in response to endoplasmic reticulum stress, promoting reticulophagy of endoplasmic reticulum sheets. In terms of tissue distribution, detected in liver (at protein level).

Its subcellular location is the endoplasmic reticulum membrane. It participates in protein modification; protein glycosylation. Its function is as follows. Subunit of the oligosaccharyl transferase (OST) complex that catalyzes the initial transfer of a defined glycan (Glc(3)Man(9)GlcNAc(2) in eukaryotes) from the lipid carrier dolichol-pyrophosphate to an asparagine residue within an Asn-X-Ser/Thr consensus motif in nascent polypeptide chains, the first step in protein N-glycosylation. N-glycosylation occurs cotranslationally and the complex associates with the Sec61 complex at the channel-forming translocon complex that mediates protein translocation across the endoplasmic reticulum (ER). All subunits are required for a maximal enzyme activity. The polypeptide is Dolichyl-diphosphooligosaccharide--protein glycosyltransferase subunit 1 (Sus scrofa (Pig)).